Reading from the N-terminus, the 83-residue chain is MRKPKTEEAKKNIAAAKVGVLNPMYGTISPTRDVPHTKETRDLISLRTKQGAEYPPCPHCGKKVNKGNALRWHYDKCKFKDSK.

This is an uncharacterized protein from Escherichia coli (Bacteriophage T4).